The primary structure comprises 391 residues: uncharacterized protein (391 aa).

An OBG-type G domain is found at 85 to 314 (ATAAFVGFPS…LKEKIYEKLG (230 aa)). GTP contacts are provided by residues 91 to 98 (GFPSVGKS), 137 to 141 (DAPGI), and 267 to 270 (NKID). Positions 314–389 (GFIKIYLKPQ…EDGDILTIVI (76 aa)) constitute a TGS domain.

The protein belongs to the TRAFAC class OBG-HflX-like GTPase superfamily. OBG GTPase family.

This is an uncharacterized protein from Methanocaldococcus jannaschii (strain ATCC 43067 / DSM 2661 / JAL-1 / JCM 10045 / NBRC 100440) (Methanococcus jannaschii).